Consider the following 163-residue polypeptide: Cell division protein SepF (163 aa).

The segment at 25–53 (SVAPHSGEERESAFSRRSAERAERTERPT) is disordered. Over residues 30–51 (SGEERESAFSRRSAERAERTER) the composition is skewed to basic and acidic residues.

This sequence belongs to the SepF family. Homodimer. Interacts with FtsZ.

It is found in the cytoplasm. Its function is as follows. Cell division protein that is part of the divisome complex and is recruited early to the Z-ring. Probably stimulates Z-ring formation, perhaps through the cross-linking of FtsZ protofilaments. Its function overlaps with FtsA. The chain is Cell division protein SepF from Heliobacterium modesticaldum (strain ATCC 51547 / Ice1).